We begin with the raw amino-acid sequence, 250 residues long: Triosephosphate isomerase (250 aa).

Asn9–Lys11 provides a ligand contact to substrate. Catalysis depends on His96, which acts as the Electrophile. Residue Glu166 is the Proton acceptor of the active site. Residues Gly172, Ser212, and Gly233 to Gly234 contribute to the substrate site.

The protein belongs to the triosephosphate isomerase family. As to quaternary structure, homodimer.

The protein localises to the cytoplasm. The enzyme catalyses D-glyceraldehyde 3-phosphate = dihydroxyacetone phosphate. It functions in the pathway carbohydrate biosynthesis; gluconeogenesis. It participates in carbohydrate degradation; glycolysis; D-glyceraldehyde 3-phosphate from glycerone phosphate: step 1/1. Involved in the gluconeogenesis. Catalyzes stereospecifically the conversion of dihydroxyacetone phosphate (DHAP) to D-glyceraldehyde-3-phosphate (G3P). This chain is Triosephosphate isomerase, found in Chlorobium phaeobacteroides (strain BS1).